Here is a 421-residue protein sequence, read N- to C-terminus: UDP-N-acetylglucosamine 1-carboxyvinyltransferase (421 aa).

22–23 provides a ligand contact to phosphoenolpyruvate; sequence KN. UDP-N-acetyl-alpha-D-glucosamine is bound at residue Arg-93. Cys-117 serves as the catalytic Proton donor. Position 117 is a 2-(S-cysteinyl)pyruvic acid O-phosphothioketal (Cys-117). UDP-N-acetyl-alpha-D-glucosamine is bound by residues 122 to 126, Asp-308, and Leu-330; that span reads RPVDL.

It belongs to the EPSP synthase family. MurA subfamily.

It is found in the cytoplasm. The enzyme catalyses phosphoenolpyruvate + UDP-N-acetyl-alpha-D-glucosamine = UDP-N-acetyl-3-O-(1-carboxyvinyl)-alpha-D-glucosamine + phosphate. Its pathway is cell wall biogenesis; peptidoglycan biosynthesis. Functionally, cell wall formation. Adds enolpyruvyl to UDP-N-acetylglucosamine. This is UDP-N-acetylglucosamine 1-carboxyvinyltransferase from Wolinella succinogenes (strain ATCC 29543 / DSM 1740 / CCUG 13145 / JCM 31913 / LMG 7466 / NCTC 11488 / FDC 602W) (Vibrio succinogenes).